We begin with the raw amino-acid sequence, 287 residues long: MDKIKIALQYMMPKHLISRLVGKLAAAEMGSVTTAAIKWFIKQYKIDMSEAAQSSPEAYSTFNDFFTRALKPGIRPISDKKDYIVHPVDGAVSQCGPIKHGQIFQAKGHEYSSLALLGDRADDAKRFEDGDFATIYLAPKDYHRIHMPIKGTLSKMTYVPGELFSVNPLTAENVPGLFARNERVVAIFETEIGPMAMVLVGATIVASIETIWAGTVTPPTGKKVFTWDYPTEGPAALTLDKGAEMGRFKLGSTVVMLFAKDALDDFADDVTPKAVTRMGQPFAKIED.

Active-site charge relay system; for autoendoproteolytic cleavage activity residues include aspartate 89, histidine 146, and serine 252. Catalysis depends on serine 252, which acts as the Schiff-base intermediate with substrate; via pyruvic acid; for decarboxylase activity. Serine 252 carries the post-translational modification Pyruvic acid (Ser); by autocatalysis.

Belongs to the phosphatidylserine decarboxylase family. PSD-B subfamily. Prokaryotic type I sub-subfamily. Heterodimer of a large membrane-associated beta subunit and a small pyruvoyl-containing alpha subunit. Requires pyruvate as cofactor. Is synthesized initially as an inactive proenzyme. Formation of the active enzyme involves a self-maturation process in which the active site pyruvoyl group is generated from an internal serine residue via an autocatalytic post-translational modification. Two non-identical subunits are generated from the proenzyme in this reaction, and the pyruvate is formed at the N-terminus of the alpha chain, which is derived from the carboxyl end of the proenzyme. The autoendoproteolytic cleavage occurs by a canonical serine protease mechanism, in which the side chain hydroxyl group of the serine supplies its oxygen atom to form the C-terminus of the beta chain, while the remainder of the serine residue undergoes an oxidative deamination to produce ammonia and the pyruvoyl prosthetic group on the alpha chain. During this reaction, the Ser that is part of the protease active site of the proenzyme becomes the pyruvoyl prosthetic group, which constitutes an essential element of the active site of the mature decarboxylase.

Its subcellular location is the cell membrane. It catalyses the reaction a 1,2-diacyl-sn-glycero-3-phospho-L-serine + H(+) = a 1,2-diacyl-sn-glycero-3-phosphoethanolamine + CO2. It functions in the pathway phospholipid metabolism; phosphatidylethanolamine biosynthesis; phosphatidylethanolamine from CDP-diacylglycerol: step 2/2. In terms of biological role, catalyzes the formation of phosphatidylethanolamine (PtdEtn) from phosphatidylserine (PtdSer). The protein is Phosphatidylserine decarboxylase proenzyme of Shewanella woodyi (strain ATCC 51908 / MS32).